The primary structure comprises 758 residues: MTSGPFFFCIFIIGKYFTLGSAQDVSCPLGSFPCGNMSRCLPQLLHCNGVDDCGNRADEDHCGDNNGWSLQLDKYFANYYKLASTNSFEAETSECLVGSVPMHCLCRDLELDCDEANLRAVPSVSSNVTVMSLQRNFIRTLPPNGFRKYHELQKLCLQNNRIHSVSVSAFRGLRSLTKLYLSHNRITFLKPGVFEDLHRLEWLIIEDNHLSRISPLTFYGLNSLILLVLMNNALTRLPDKPLCQHMPRLHWLDFEGNRIHNLRNLTFISCNNLTVLVMRKNKINYLNEHAFTHLQKLDELDLGSNKIENLPPNIFKDLKELSQLNISYNPIQKIEVNQFDCLAKLKSLSLEGIEISNIQQRMFRPLINLSHIYFKKFQYCGYAPHVRSCKPNTDGISSLENLLASIIQRVFVWVVSAITCFGNIFVICMRPYIRSENKLHAMSIISLCCADCLMGVYLFVIGAFDLKFRGEYNKHAQPWMESVHCQFMGSLAILSTEVSVLLLTFLTLEKYICIVYPFRCLRPRKCRTITVLIFIWIIGFIVAFAPLGNKEFFKNYYGTNGVCFPLHSEDTGSTGAQIYSVVIFLGINLVAFIIIVFSYGSMFYSVHQSSVTVTEIQKQVKKEVVLAKRFFFIVFTDALCWIPIFILKFLSLLQVEIPDSITSWVVIFILPINSALNPIIYTLTTRPFKEMIHQLWHNYRQRRSVDRKETQKAYAPSFIWVEMWPLQEMSSGFMKPGAFTDPCDLSLVSQSSRLNSYS.

At 1–409 (MTSGPFFFCI…ENLLASIIQR (409 aa)) the chain is on the extracellular side. An LDL-receptor class A domain is found at 26-63 (SCPLGSFPCGNMSRCLPQLLHCNGVDDCGNRADEDHCG). Disulfide bonds link Cys-27–Cys-40, Cys-34–Cys-53, and Cys-47–Cys-62. Asn-36 carries N-linked (GlcNAc...) asparagine glycosylation. Positions 45, 48, 50, 52, 58, and 59 each coordinate Ca(2+). Asn-127 carries N-linked (GlcNAc...) asparagine glycosylation. LRR repeat units follow at residues 127-148 (NVTVMSLQRNFIRTLPPNGFRK), 151-172 (ELQKLCLQNNRIHSVSVSAFRG), 175-196 (SLTKLYLSHNRITFLKPGVFED), 199-220 (RLEWLIIEDNHLSRISPLTFYG), 223-244 (SLILLVLMNNALTRLPDKPLCQ), 248-269 (RLHWLDFEGNRIHNLRNLTFIS), 272-293 (NLTVLVMRKNKINYLNEHAFTH), 296-317 (KLDELDLGSNKIENLPPNIFKD), 320-341 (ELSQLNISYNPIQKIEVNQFDC), and 344-365 (KLKSLSLEGIEISNIQQRMFRP). Residues Asn-264 and Asn-272 are each glycosylated (N-linked (GlcNAc...) asparagine). N-linked (GlcNAc...) asparagine glycosylation occurs at Asn-325. Asn-368 is a glycosylation site (N-linked (GlcNAc...) asparagine). The chain crosses the membrane as a helical span at residues 410–430 (VFVWVVSAITCFGNIFVICMR). At 431 to 443 (PYIRSENKLHAMS) the chain is on the cytoplasmic side. A helical membrane pass occupies residues 444–464 (IISLCCADCLMGVYLFVIGAF). The Extracellular portion of the chain corresponds to 465 to 486 (DLKFRGEYNKHAQPWMESVHCQ). An intrachain disulfide couples Cys-485 to Cys-563. The chain crosses the membrane as a helical span at residues 487–507 (FMGSLAILSTEVSVLLLTFLT). The Cytoplasmic segment spans residues 508–527 (LEKYICIVYPFRCLRPRKCR). Residues 528–548 (TITVLIFIWIIGFIVAFAPLG) form a helical membrane-spanning segment. At 549–577 (NKEFFKNYYGTNGVCFPLHSEDTGSTGAQ) the chain is on the extracellular side. Residues 578 to 598 (IYSVVIFLGINLVAFIIIVFS) form a helical membrane-spanning segment. The Cytoplasmic portion of the chain corresponds to 599-629 (YGSMFYSVHQSSVTVTEIQKQVKKEVVLAKR). Residues 630-650 (FFFIVFTDALCWIPIFILKFL) traverse the membrane as a helical segment. Residue Ser-651 is a topological domain, extracellular. Residues 652–672 (LLQVEIPDSITSWVVIFILPI) traverse the membrane as a helical segment. Residues 673 to 758 (NSALNPIIYT…SQSSRLNSYS (86 aa)) are Cytoplasmic-facing.

The protein belongs to the G-protein coupled receptor 1 family. In terms of assembly, interacts with C1QTNF8.

It localises to the cell membrane. Functionally, receptor for relaxins. The activity of this receptor is mediated by G proteins leading to stimulation of adenylate cyclase and an increase of cAMP. Binding of the ligand may also activate a tyrosine kinase pathway that inhibits the activity of a phosphodiesterase that degrades cAMP. In Mus musculus (Mouse), this protein is Relaxin receptor 1 (Rxfp1).